A 369-amino-acid chain; its full sequence is 3-dehydroquinate synthase (369 aa).

NAD(+) contacts are provided by residues 75 to 80 (DGEEHK), 109 to 113 (GVIGD), 133 to 134 (TT), K146, K155, and 173 to 176 (TLKT). The Zn(2+) site is built by E188, H251, and H268.

It belongs to the sugar phosphate cyclases superfamily. Dehydroquinate synthase family. It depends on Co(2+) as a cofactor. Requires Zn(2+) as cofactor. NAD(+) serves as cofactor.

It is found in the cytoplasm. The enzyme catalyses 7-phospho-2-dehydro-3-deoxy-D-arabino-heptonate = 3-dehydroquinate + phosphate. Its pathway is metabolic intermediate biosynthesis; chorismate biosynthesis; chorismate from D-erythrose 4-phosphate and phosphoenolpyruvate: step 2/7. Its function is as follows. Catalyzes the conversion of 3-deoxy-D-arabino-heptulosonate 7-phosphate (DAHP) to dehydroquinate (DHQ). The sequence is that of 3-dehydroquinate synthase from Legionella pneumophila (strain Paris).